We begin with the raw amino-acid sequence, 168 residues long: Cyclin-dependent kinase 4 inhibitor C (168 aa).

ANK repeat units lie at residues 4–33 (PWGN…NVNA), 37–65 (FGRT…NPDL), 69–98 (TGFA…DVNI), and 102–132 (EGNL…NVGH).

This sequence belongs to the CDKN2 cyclin-dependent kinase inhibitor family. Heterodimer of p18 with CDK6. Highest levels found in skeletal muscle. Also found in pancreas and heart.

Interacts strongly with CDK6, weakly with CDK4. Inhibits cell growth and proliferation with a correlated dependence on endogenous retinoblastoma protein RB. The protein is Cyclin-dependent kinase 4 inhibitor C (CDKN2C) of Homo sapiens (Human).